A 284-amino-acid chain; its full sequence is Co-chaperone protein DjlA (284 aa).

The Periplasmic segment spans residues 1–6 (MHIFGK). A helical transmembrane segment spans residues 7 to 30 (ILGAFFGLLLGGPFGLLFGLFIGH). The Cytoplasmic segment spans residues 31 to 284 (QFDKARRLSQ…DLIKKVKGFK (254 aa)). A J domain is found at 218–284 (DAYKILDVSP…DLIKKVKGFK (67 aa)).

Homodimer.

It localises to the cell inner membrane. Regulatory DnaK co-chaperone. Direct interaction between DnaK and DjlA is needed for the induction of the wcaABCDE operon, involved in the synthesis of a colanic acid polysaccharide capsule, possibly through activation of the RcsB/RcsC phosphotransfer signaling pathway. The colanic acid capsule may help the bacterium survive conditions outside the host. This chain is Co-chaperone protein DjlA, found in Vibrio parahaemolyticus serotype O3:K6 (strain RIMD 2210633).